The chain runs to 478 residues: tRNA modification GTPase MnmE (478 aa).

Positions 36, 94, and 133 each coordinate (6S)-5-formyl-5,6,7,8-tetrahydrofolate. Residues 230 to 402 (GIHVVLAGRP…LVETLCAKVG (173 aa)) form the TrmE-type G domain. Asn240 serves as a coordination point for K(+). Residues 240–245 (NAGKSS), 259–265 (TDVAGTT), and 284–287 (DTAG) contribute to the GTP site. Ser244 serves as a coordination point for Mg(2+). The K(+) site is built by Thr259, Val261, and Thr264. Residue Thr265 coordinates Mg(2+). Lys478 provides a ligand contact to (6S)-5-formyl-5,6,7,8-tetrahydrofolate.

The protein belongs to the TRAFAC class TrmE-Era-EngA-EngB-Septin-like GTPase superfamily. TrmE GTPase family. As to quaternary structure, homodimer. Heterotetramer of two MnmE and two MnmG subunits. It depends on K(+) as a cofactor.

The protein resides in the cytoplasm. In terms of biological role, exhibits a very high intrinsic GTPase hydrolysis rate. Involved in the addition of a carboxymethylaminomethyl (cmnm) group at the wobble position (U34) of certain tRNAs, forming tRNA-cmnm(5)s(2)U34. The sequence is that of tRNA modification GTPase MnmE from Psychrobacter cryohalolentis (strain ATCC BAA-1226 / DSM 17306 / VKM B-2378 / K5).